The primary structure comprises 987 residues: UPF0182 protein Lxx09300 (987 aa).

7 helical membrane passes run 17–37 (VWTT…FAGL), 59–79 (AAIA…WVVI), 108–128 (RLAM…SAAS), 167–187 (VGFA…TCYL), 206–226 (VQIS…VWLD), 256–276 (AVLA…AFTG), and 283–303 (VGTA…PWAI). 2 disordered regions span residues 700–719 (RDDA…DPTL) and 886–947 (TAGD…ALQQ). Over residues 705-719 (TTPNDPTSSPTDPTL) the composition is skewed to low complexity. Gly residues predominate over residues 897-932 (GGSGGGSSGDAGSSAGGGSSGGGGSSAGGSSSGSGS). The span at 933–947 (SGTQSNAALQRALQQ) shows a compositional bias: low complexity.

The protein belongs to the UPF0182 family.

The protein resides in the cell membrane. The chain is UPF0182 protein Lxx09300 from Leifsonia xyli subsp. xyli (strain CTCB07).